The following is a 382-amino-acid chain: Chaperone protein DnaJ (382 aa).

The J domain maps to 5–70 (DYYEVLGVSR…DKKAAYDRYG (66 aa)). A CR-type zinc finger spans residues 141–219 (GVQKTINVPA…CHGAGRVEKE (79 aa)). Positions 154, 157, 171, 174, 193, 196, 207, and 210 each coordinate Zn(2+). CXXCXGXG motif repeat units lie at residues 154–161 (CDSCKGTG), 171–178 (CPTCSGMG), 193–200 (CPTCNGMG), and 207–214 (CKSCHGAG).

It belongs to the DnaJ family. Homodimer. Zn(2+) serves as cofactor.

The protein resides in the cytoplasm. Functionally, participates actively in the response to hyperosmotic and heat shock by preventing the aggregation of stress-denatured proteins and by disaggregating proteins, also in an autonomous, DnaK-independent fashion. Unfolded proteins bind initially to DnaJ; upon interaction with the DnaJ-bound protein, DnaK hydrolyzes its bound ATP, resulting in the formation of a stable complex. GrpE releases ADP from DnaK; ATP binding to DnaK triggers the release of the substrate protein, thus completing the reaction cycle. Several rounds of ATP-dependent interactions between DnaJ, DnaK and GrpE are required for fully efficient folding. Also involved, together with DnaK and GrpE, in the DNA replication of plasmids through activation of initiation proteins. This chain is Chaperone protein DnaJ, found in Cereibacter sphaeroides (strain ATCC 17025 / ATH 2.4.3) (Rhodobacter sphaeroides).